The following is a 244-amino-acid chain: Lymphotoxin-beta (244 aa).

At 1-18 the chain is on the cytoplasmic side; sequence MGALGLEGRGGRLQGRGS. A helical; Signal-anchor for type II membrane protein transmembrane segment spans residues 19 to 48; sequence LLLAVAGATSLVTLLLAVPITVLAVLALVP. The Extracellular segment spans residues 49 to 244; it reads QDQGGLVTET…KTFFGAVMVG (196 aa). In terms of domain architecture, THD spans 88-243; it reads PAAHLIGAPL…GKTFFGAVMV (156 aa). N222 is a glycosylation site (N-linked (GlcNAc...) asparagine).

Belongs to the tumor necrosis factor family. Heterotrimer of either two LTB and one LTA subunits or (less prevalent) one LTB and two LTA subunits. In terms of tissue distribution, spleen and thymus.

Its subcellular location is the membrane. In terms of biological role, cytokine that binds to LTBR/TNFRSF3. May play a specific role in immune response regulation. Provides the membrane anchor for the attachment of the heterotrimeric complex to the cell surface. Isoform 2 is probably non-functional. This Homo sapiens (Human) protein is Lymphotoxin-beta (LTB).